The following is an 85-amino-acid chain: BmK AGP-SYPU2 (85 aa).

Positions 1 to 19 are cleaved as a signal peptide; that stretch reads MNYMVIISLALLVMTGVES. Positions 21 to 83 constitute an LCN-type CS-alpha/beta domain; sequence KDGYIADDRN…ARIMKPGRCN (63 aa). Disulfide bonds link cysteine 31/cysteine 82, cysteine 35/cysteine 55, cysteine 41/cysteine 65, and cysteine 45/cysteine 67.

It belongs to the long (4 C-C) scorpion toxin superfamily. Sodium channel inhibitor family. Alpha subfamily. Expressed by the venom gland.

The protein resides in the secreted. Its function is as follows. Alpha toxins bind voltage-independently at site-3 of sodium channels (Nav) and inhibit the inactivation of the activated channels, thereby blocking neuronal transmission. Shows analgesic activity when intraperitoneally injected into mice. The polypeptide is BmK AGP-SYPU2 (Olivierus martensii (Manchurian scorpion)).